Here is a 272-residue protein sequence, read N- to C-terminus: Dermonecrotic toxin LvSicTox-alphaIC1aiii (272 aa).

Residue histidine 4 is part of the active site. Mg(2+) is bound by residues glutamate 24 and aspartate 26. The active-site Nucleophile is histidine 40. Intrachain disulfides connect cysteine 44–cysteine 50 and cysteine 46–cysteine 189. Aspartate 84 contacts Mg(2+).

The protein belongs to the arthropod phospholipase D family. Class II subfamily. Mg(2+) is required as a cofactor. As to expression, expressed by the venom gland.

It is found in the secreted. The catalysed reaction is an N-(acyl)-sphingosylphosphocholine = an N-(acyl)-sphingosyl-1,3-cyclic phosphate + choline. It carries out the reaction an N-(acyl)-sphingosylphosphoethanolamine = an N-(acyl)-sphingosyl-1,3-cyclic phosphate + ethanolamine. It catalyses the reaction a 1-acyl-sn-glycero-3-phosphocholine = a 1-acyl-sn-glycero-2,3-cyclic phosphate + choline. The enzyme catalyses a 1-acyl-sn-glycero-3-phosphoethanolamine = a 1-acyl-sn-glycero-2,3-cyclic phosphate + ethanolamine. Dermonecrotic toxins cleave the phosphodiester linkage between the phosphate and headgroup of certain phospholipids (sphingolipid and lysolipid substrates), forming an alcohol (often choline) and a cyclic phosphate. This toxin acts on sphingomyelin (SM). It may also act on ceramide phosphoethanolamine (CPE), lysophosphatidylcholine (LPC) and lysophosphatidylethanolamine (LPE), but not on lysophosphatidylserine (LPS), and lysophosphatidylglycerol (LPG). It acts by transphosphatidylation, releasing exclusively cyclic phosphate products as second products. Induces dermonecrosis, hemolysis, increased vascular permeability, edema, inflammatory response, and platelet aggregation. The sequence is that of Dermonecrotic toxin LvSicTox-alphaIC1aiii from Loxosceles variegata (Recluse spider).